Here is a 149-residue protein sequence, read N- to C-terminus: UPF0756 membrane protein MS1439 (149 aa).

The next 4 helical transmembrane spans lie at 10–32 (IMLV…ISAL), 56–76 (VGII…KVQL), 82–102 (FLNW…WFAG), and 126–146 (VAFL…LAVI).

It belongs to the UPF0756 family.

The protein localises to the cell membrane. This Mannheimia succiniciproducens (strain KCTC 0769BP / MBEL55E) protein is UPF0756 membrane protein MS1439.